The following is a 716-amino-acid chain: Fatty acid oxidation complex subunit alpha (716 aa).

The interval 1–188 (MIYQSPTIQV…KVGAIDAVVA (188 aa)) is enoyl-CoA hydratase/isomerase. Position 295 (aspartate 295) interacts with substrate. The interval 310-716 (KDIKHAAVLG…SNNGSYYPKA (407 aa)) is 3-hydroxyacyl-CoA dehydrogenase. NAD(+) contacts are provided by residues methionine 323, aspartate 342, 399 to 401 (VVE), lysine 406, and serine 428. Residue histidine 449 is the For 3-hydroxyacyl-CoA dehydrogenase activity of the active site. Residue asparagine 452 participates in NAD(+) binding. The substrate site is built by asparagine 499 and tyrosine 659.

It in the N-terminal section; belongs to the enoyl-CoA hydratase/isomerase family. In the C-terminal section; belongs to the 3-hydroxyacyl-CoA dehydrogenase family. As to quaternary structure, heterotetramer of two alpha chains (FadB) and two beta chains (FadA).

The catalysed reaction is a (3S)-3-hydroxyacyl-CoA + NAD(+) = a 3-oxoacyl-CoA + NADH + H(+). It catalyses the reaction a (3S)-3-hydroxyacyl-CoA = a (2E)-enoyl-CoA + H2O. The enzyme catalyses a 4-saturated-(3S)-3-hydroxyacyl-CoA = a (3E)-enoyl-CoA + H2O. It carries out the reaction (3S)-3-hydroxybutanoyl-CoA = (3R)-3-hydroxybutanoyl-CoA. The catalysed reaction is a (3Z)-enoyl-CoA = a 4-saturated (2E)-enoyl-CoA. It catalyses the reaction a (3E)-enoyl-CoA = a 4-saturated (2E)-enoyl-CoA. It participates in lipid metabolism; fatty acid beta-oxidation. Its function is as follows. Involved in the aerobic and anaerobic degradation of long-chain fatty acids via beta-oxidation cycle. Catalyzes the formation of 3-oxoacyl-CoA from enoyl-CoA via L-3-hydroxyacyl-CoA. It can also use D-3-hydroxyacyl-CoA and cis-3-enoyl-CoA as substrate. The sequence is that of Fatty acid oxidation complex subunit alpha from Shewanella amazonensis (strain ATCC BAA-1098 / SB2B).